Consider the following 103-residue polypeptide: Methanol dehydrogenase [cytochrome c] subunit 2 (103 aa).

Residues 1 to 20 form the signal peptide; the sequence is MKRILTLTVAALALGTPALA. Cys26 and Cys32 are oxidised to a cystine.

The protein belongs to the methanol dehydrogenase subunit 2 family. As to quaternary structure, heterotetramer composed of 2 alpha and 2 beta subunits.

The protein localises to the periplasm. The catalysed reaction is 2 Fe(III)-[cytochrome cL] + a primary alcohol = 2 Fe(II)-[cytochrome cL] + an aldehyde + 2 H(+). Functionally, catalyzes the oxidation of primary alcohols including methanol. This is Methanol dehydrogenase [cytochrome c] subunit 2 (moxI) from Paracoccus denitrificans.